A 502-amino-acid polypeptide reads, in one-letter code: ATP synthase subunit alpha (502 aa).

169–176 (GDRQTGKT) contacts ATP.

This sequence belongs to the ATPase alpha/beta chains family. As to quaternary structure, F-type ATPases have 2 components, CF(1) - the catalytic core - and CF(0) - the membrane proton channel. CF(1) has five subunits: alpha(3), beta(3), gamma(1), delta(1), epsilon(1). CF(0) has three main subunits: a(1), b(2) and c(9-12). The alpha and beta chains form an alternating ring which encloses part of the gamma chain. CF(1) is attached to CF(0) by a central stalk formed by the gamma and epsilon chains, while a peripheral stalk is formed by the delta and b chains.

It is found in the cell inner membrane. The enzyme catalyses ATP + H2O + 4 H(+)(in) = ADP + phosphate + 5 H(+)(out). Produces ATP from ADP in the presence of a proton gradient across the membrane. The alpha chain is a regulatory subunit. The protein is ATP synthase subunit alpha of Thermodesulfovibrio yellowstonii (strain ATCC 51303 / DSM 11347 / YP87).